The chain runs to 201 residues: Acyl-homoserine-lactone synthase (201 aa).

Belongs to the autoinducer synthase family.

It catalyses the reaction a fatty acyl-[ACP] + S-adenosyl-L-methionine = an N-acyl-L-homoserine lactone + S-methyl-5'-thioadenosine + holo-[ACP] + H(+). In terms of biological role, required for the synthesis of BHL (N-butanoyl-L-homoserine lactone), and HHL (N-hexanoyl-L-homoserine lactone) autoinducer molecules which bind to RhlR and thus acts in elastase biosynthesis regulation. In Pseudomonas aeruginosa (strain ATCC 15692 / DSM 22644 / CIP 104116 / JCM 14847 / LMG 12228 / 1C / PRS 101 / PAO1), this protein is Acyl-homoserine-lactone synthase (rhlI).